Reading from the N-terminus, the 498-residue chain is ATP synthase subunit beta, chloroplastic (498 aa).

At Thr-6 the chain carries Phosphothreonine. A Phosphoserine modification is found at Ser-13. Residue 172–179 coordinates ATP; that stretch reads GGAGVGKT.

Belongs to the ATPase alpha/beta chains family. As to quaternary structure, F-type ATPases have 2 components, CF(1) - the catalytic core - and CF(0) - the membrane proton channel. CF(1) has five subunits: alpha(3), beta(3), gamma(1), delta(1), epsilon(1). CF(0) has four main subunits: a(1), b(1), b'(1) and c(9-12).

It is found in the plastid. It localises to the chloroplast thylakoid membrane. It carries out the reaction ATP + H2O + 4 H(+)(in) = ADP + phosphate + 5 H(+)(out). Its function is as follows. Produces ATP from ADP in the presence of a proton gradient across the membrane. The catalytic sites are hosted primarily by the beta subunits. This Capsella bursa-pastoris (Shepherd's purse) protein is ATP synthase subunit beta, chloroplastic.